Here is a 100-residue protein sequence, read N- to C-terminus: MDLTPREKDKLLIFTAALLAERRRARGLKLNHPEAVALITAAILEGARDGQSVAQLMSAGQQVLTRADVMDGVAEMIPDIQVEATFPDGTKLVTVHQPIA.

The protein belongs to the urease gamma subunit family. As to quaternary structure, heterotrimer of UreA (gamma), UreB (beta) and UreC (alpha) subunits. Three heterotrimers associate to form the active enzyme.

The protein resides in the cytoplasm. It catalyses the reaction urea + 2 H2O + H(+) = hydrogencarbonate + 2 NH4(+). It participates in nitrogen metabolism; urea degradation; CO(2) and NH(3) from urea (urease route): step 1/1. This Methylibium petroleiphilum (strain ATCC BAA-1232 / LMG 22953 / PM1) protein is Urease subunit gamma.